Consider the following 135-residue polypeptide: uncharacterized protein (135 aa).

Residues 13-129 (QVLIAENSRF…KILEKVNAAI (117 aa)) enclose the Response regulatory domain. The residue at position 64 (Asp64) is a 4-aspartylphosphate.

This is an uncharacterized protein from Leptospira interrogans serogroup Icterohaemorrhagiae serovar copenhageni (strain Fiocruz L1-130).